A 151-amino-acid chain; its full sequence is Small ribosomal subunit protein uS15y (151 aa).

It belongs to the universal ribosomal protein uS15 family.

The sequence is that of Small ribosomal subunit protein uS15y (RPS13B) from Arabidopsis thaliana (Mouse-ear cress).